Consider the following 260-residue polypeptide: MFEARLLRSSILKKVLEAIKDLLTQATFDCDDNGIQLQAMDNSHVSLVSLTLRADGFDKYRCDRNISMGMNLGSMSKILIFAGDKDTATIKAQDNADNVTFVFESPNQEKVSDYEMKLMNLDLEHLGIPETEYSCTIRMPSSEFARICRDLSQFGESMVISCTKEGVKFSATGDIGSANVKLAQTASIDKEEEAVVIEMEEPVTLTFACQYLNYFTKATSLSPQVQLSMSADVPLVVEYRIPDIGHIRYYLAPKIEEEDS.

A DNA-binding region spans residues 61–80; the sequence is RCDRNISMGMNLGSMSKILI.

The protein belongs to the PCNA family. In terms of assembly, homotrimer. Forms a complex with activator 1 heteropentamer in the presence of ATP.

The protein localises to the nucleus. Its function is as follows. This protein is an auxiliary protein of DNA polymerase delta and is involved in the control of eukaryotic DNA replication by increasing the polymerase's processibility during elongation of the leading strand. This chain is Proliferating cell nuclear antigen (PCNA), found in Bombyx mori (Silk moth).